Here is a 586-residue protein sequence, read N- to C-terminus: Arginine--tRNA ligase (586 aa).

The short motif at 131–141 is the 'HIGH' region element; it reads ANPTGPLHVGH.

The protein belongs to the class-I aminoacyl-tRNA synthetase family. Monomer.

Its subcellular location is the cytoplasm. The catalysed reaction is tRNA(Arg) + L-arginine + ATP = L-arginyl-tRNA(Arg) + AMP + diphosphate. The sequence is that of Arginine--tRNA ligase from Nitrosomonas europaea (strain ATCC 19718 / CIP 103999 / KCTC 2705 / NBRC 14298).